Here is a 250-residue protein sequence, read N- to C-terminus: MSEQYPVLSGAEPFYAENGPVGVLLVHGFTGTPHSMRPLAEAYAKAGYTVCLPRLKGHGTHYEDMERTTFHDWVASVEEGYGWLKQRCQTIFVTGLSMGGTLTLYLAEHHPDICGIVPINAAVDIPAIAAGMTGGGELPRYLDSIGSDLKNPDVKELAYEKTPTASLLQLARLMAQTKAKLDRIVCPALIFVSDEDHVVPPGNADIIFQGISSTEKEIVRLRNSYHVATLDYDQPMIIERSLEFFAKHAG.

F29 provides a ligand contact to substrate. S97 functions as the Nucleophile in the catalytic mechanism. M98 serves as a coordination point for substrate. Catalysis depends on charge relay system residues D196 and H226.

It belongs to the lipase/esterase LIP3/BchO family. In terms of assembly, monomer.

The enzyme catalyses Hydrolyzes glycerol monoesters of long-chain fatty acids.. With respect to regulation, not inhibited by cholate, but slightly inhibited by triton X-100 and deoxycholate. Completely inhibited by PMSF (phenylmethylsulfonyl fluoride) at a concentration of 200 uM. In terms of biological role, hydrolyzes monoacylglycerols, with the highest activity occurring with 1-monolauroylglycerol. This chain is Thermostable monoacylglycerol lipase, found in Bacillus sp. (strain H-257).